The chain runs to 335 residues: Galactosylgalactosylxylosylprotein 3-beta-glucuronosyltransferase 3 (335 aa).

At 1 to 7 (MKLKLKN) the chain is on the cytoplasmic side. The helical; Signal-anchor for type II membrane protein transmembrane segment at 8 to 28 (VFLAYFLVSIAGLLYALVQLG) threads the bilayer. At 29-335 (QPCDCLPPLR…GRGSDPAIEV (307 aa)) the chain is on the lumenal side. UDP-alpha-D-glucuronate contacts are provided by residues 82 to 84 (PTY), Asp113, Arg156, Arg161, and 194 to 196 (DDD). Asp196 is a Mn(2+) binding site. Residues 243–252 (WEPSRPFPVD) are interaction with galactose moiety of substrate glycoprotein. Residue Glu281 is the Proton donor/acceptor of the active site. N-linked (GlcNAc...) asparagine glycosylation occurs at Asn300. 308-310 (HTR) lines the UDP-alpha-D-glucuronate pocket. Residues 312–322 (EKPKMKQEEQL) show a composition bias toward basic and acidic residues. The disordered stretch occupies residues 312–335 (EKPKMKQEEQLQRQGRGSDPAIEV).

This sequence belongs to the glycosyltransferase 43 family. As to quaternary structure, homodimer; disulfide-linked. Interacts with PXYLP1; the interaction increases the 2-phosphoxylose phosphatase activity of PXYLP1 during completion of linkage region formation in a B3GAT3-mediated manner. Mn(2+) serves as cofactor. In terms of processing, N-glycosylated. As to expression, ubiquitous (but weakly expressed in all tissues examined).

The protein resides in the golgi apparatus membrane. It localises to the golgi apparatus. Its subcellular location is the cis-Golgi network. The enzyme catalyses 3-O-(beta-D-galactosyl-(1-&gt;3)-beta-D-galactosyl-(1-&gt;4)-beta-D-xylosyl)-L-seryl-[protein] + UDP-alpha-D-glucuronate = 3-O-(beta-D-GlcA-(1-&gt;3)-beta-D-Gal-(1-&gt;3)-beta-D-Gal-(1-&gt;4)-beta-D-Xyl)-L-seryl-[protein] + UDP + H(+). It functions in the pathway protein modification; protein glycosylation. With respect to regulation, inhibited by EDTA. Functionally, glycosaminoglycans biosynthesis. Involved in forming the linkage tetrasaccharide present in heparan sulfate and chondroitin sulfate. Transfers a glucuronic acid moiety from the uridine diphosphate-glucuronic acid (UDP-GlcUA) to the common linkage region trisaccharide Gal-beta-1,3-Gal-beta-1,4-Xyl covalently bound to a Ser residue at the glycosaminylglycan attachment site of proteoglycans. Can also play a role in the biosynthesis of l2/HNK-1 carbohydrate epitope on glycoproteins. Shows strict specificity for Gal-beta-1,3-Gal-beta-1,4-Xyl, exhibiting negligible incorporation into other galactoside substrates including Galbeta1-3Gal beta1-O-benzyl, Galbeta1-4GlcNAc and Galbeta1-4Glc. Stimulates 2-phosphoxylose phosphatase activity of PXYLP1 in presence of uridine diphosphate-glucuronic acid (UDP-GlcUA) during completion of linkage region formation. The chain is Galactosylgalactosylxylosylprotein 3-beta-glucuronosyltransferase 3 (B3GAT3) from Homo sapiens (Human).